Reading from the N-terminus, the 173-residue chain is Shikimate kinase (173 aa).

14-19 (GAGKST) serves as a coordination point for ATP. Serine 18 contributes to the Mg(2+) binding site. Substrate-binding residues include aspartate 36, arginine 60, and glycine 82. An ATP-binding site is contributed by arginine 120. Substrate is bound at residue arginine 139. Glutamine 156 lines the ATP pocket.

The protein belongs to the shikimate kinase family. In terms of assembly, monomer. Mg(2+) is required as a cofactor.

Its subcellular location is the cytoplasm. The enzyme catalyses shikimate + ATP = 3-phosphoshikimate + ADP + H(+). Its pathway is metabolic intermediate biosynthesis; chorismate biosynthesis; chorismate from D-erythrose 4-phosphate and phosphoenolpyruvate: step 5/7. In terms of biological role, catalyzes the specific phosphorylation of the 3-hydroxyl group of shikimic acid using ATP as a cosubstrate. The chain is Shikimate kinase from Actinobacillus pleuropneumoniae serotype 5b (strain L20).